Here is a 615-residue protein sequence, read N- to C-terminus: 3-(3-hydroxy-phenyl)propionate/3-hydroxycinnamic acid hydroxylase 1 (615 aa).

A disordered region spans residues 1–20; sequence MRPAFEPAAGLGRAHPHETT. FAD contacts are provided by residues 27-56 and 294-304; these read DVAIIGAGPVGLMIANILGLQGVRVVVVEK and FRVKRILLAGD.

This sequence belongs to the PheA/TfdB FAD monooxygenase family. FAD is required as a cofactor.

The catalysed reaction is 3-(3-hydroxyphenyl)propanoate + NADH + O2 + H(+) = 3-(2,3-dihydroxyphenyl)propanoate + NAD(+) + H2O. It carries out the reaction (2E)-3-(3-hydroxyphenyl)prop-2-enoate + NADH + O2 + H(+) = (2E)-3-(2,3-dihydroxyphenyl)prop-2-enoate + NAD(+) + H2O. It participates in aromatic compound metabolism; 3-phenylpropanoate degradation. In terms of biological role, catalyzes the insertion of one atom of molecular oxygen into position 2 of the phenyl ring of 3-(3-hydroxyphenyl)propionate (3-HPP) and hydroxycinnamic acid (3HCI). The sequence is that of 3-(3-hydroxy-phenyl)propionate/3-hydroxycinnamic acid hydroxylase 1 from Burkholderia vietnamiensis (strain G4 / LMG 22486) (Burkholderia cepacia (strain R1808)).